The chain runs to 315 residues: Cyclin-dependent kinase B2-2 (315 aa).

Positions F16–F306 constitute a Protein kinase domain. ATP-binding positions include V22–V30 and K45. Y27 bears the Phosphotyrosine mark. The active-site Proton acceptor is D147. At T181 the chain carries Phosphothreonine.

The protein belongs to the protein kinase superfamily. CMGC Ser/Thr protein kinase family. CDC2/CDKX subfamily. Expressed in flowers.

The catalysed reaction is L-seryl-[protein] + ATP = O-phospho-L-seryl-[protein] + ADP + H(+). It catalyses the reaction L-threonyl-[protein] + ATP = O-phospho-L-threonyl-[protein] + ADP + H(+). The enzyme catalyses [DNA-directed RNA polymerase] + ATP = phospho-[DNA-directed RNA polymerase] + ADP + H(+). The protein is Cyclin-dependent kinase B2-2 (CDKB2-2) of Arabidopsis thaliana (Mouse-ear cress).